Reading from the N-terminus, the 238-residue chain is Ribonuclease PH (238 aa).

Phosphate is bound by residues R86 and 124–126; that span reads GTR.

The protein belongs to the RNase PH family. In terms of assembly, homohexameric ring arranged as a trimer of dimers.

The enzyme catalyses tRNA(n+1) + phosphate = tRNA(n) + a ribonucleoside 5'-diphosphate. Its function is as follows. Phosphorolytic 3'-5' exoribonuclease that plays an important role in tRNA 3'-end maturation. Removes nucleotide residues following the 3'-CCA terminus of tRNAs; can also add nucleotides to the ends of RNA molecules by using nucleoside diphosphates as substrates, but this may not be physiologically important. Probably plays a role in initiation of 16S rRNA degradation (leading to ribosome degradation) during starvation. The protein is Ribonuclease PH of Vibrio parahaemolyticus serotype O3:K6 (strain RIMD 2210633).